The chain runs to 675 residues: Protein distal antenna (675 aa).

Positions 5 to 56 (TKGKRPLRHLTATDKIDAIQRIHDGESKASVARDIGVPESTLRGWCKNEEKL) constitute an HTH psq-type domain. Positions 32 to 52 (KASVARDIGVPESTLRGWCKN) form a DNA-binding region, H-T-H motif. Disordered regions lie at residues 239 to 269 (QSLR…KNPS), 337 to 393 (LYSS…PEDT), 458 to 534 (LNII…SKCN), 546 to 596 (FQNP…AHKS), and 655 to 675 (ERQQ…RRRK). Positions 339–368 (SSMPRPSSPQQSSSPPQQHQQVQHHPSTQT) are enriched in low complexity. The segment covering 369–384 (PTPPIVSTPQPTPPSS) has biased composition (pro residues). Over residues 469–478 (VKSEPEDLSN) the composition is skewed to basic and acidic residues. The segment covering 479-493 (HNHSSSNAAAVAAPA) has biased composition (low complexity). Residues 499 to 508 (FNPSPSTSAK) show a composition bias toward polar residues. Over residues 513–528 (QEDDEEQAGPADDESP) the composition is skewed to acidic residues. A compositionally biased stretch (low complexity) spans 559–579 (NLSIRSNNSPRRRSVSPAVSN).

As to quaternary structure, homomers. Interacts with itself, danr, ey and dac to form a complex (or complexes) containing the RD factors.

It localises to the nucleus. Its function is as follows. Probable transcription factor with a role in the retinal determination (RD) network. Contributes to differentiation of antenna-specific characteristics. This chain is Protein distal antenna, found in Aedes aegypti (Yellowfever mosquito).